A 1061-amino-acid polypeptide reads, in one-letter code: Ribonuclease E (1061 aa).

In terms of domain architecture, S1 motif spans 39–119; sequence ANIYKGKITR…GNKGAALTTF (81 aa). The tract at residues 57-112 is interaction with RNA; the sequence is FVDYGAERHGFLPLKEIAREYFPANYSAHGRPNIKDVLREGQEVIVQIDKEERGNK. The interaction with RNA 5'-terminal monophosphate stretch occupies residues 169–170; that stretch reads RT. Residues aspartate 303 and aspartate 346 each coordinate Mg(2+). Residues cysteine 404 and cysteine 407 each contribute to the Zn(2+) site. Residues 404–407 form a required for zinc-mediated homotetramerization and catalytic activity region; that stretch reads CPRC. Disordered stretches follow at residues 532–565, 586–731, and 752–822; these read FAMP…PAAP, EETK…KVRY, and EPIV…RYPT. Pro residues predominate over residues 536 to 546; the sequence is DVPPAPTPAEP. Positions 547 to 565 are enriched in low complexity; it reads AAPVVAPAPKAAPATPAAP. Composition is skewed to basic and acidic residues over residues 598–608, 615–640, and 652–690; these read AEAKPERQQDR, NRRD…EENR, and ETRE…KRQA. A compositionally biased stretch (basic residues) spans 796–814; the sequence is RRSRRSPRHLRVSGQRRRR. The interval 833 to 850 is interaction with enolase; the sequence is ASPELASGKVWIRYPIVR. An interaction with PNPase region spans residues 1021–1061; the sequence is EAPRHSDWQRPTFAFEGKGAAGGHTATHHASAAPARPQPVE. Positions 1031–1061 are disordered; sequence PTFAFEGKGAAGGHTATHHASAAPARPQPVE. The span at 1043–1055 shows a compositional bias: low complexity; the sequence is GHTATHHASAAPA.

It belongs to the RNase E/G family. RNase E subfamily. As to quaternary structure, component of the RNA degradosome, which is a multiprotein complex involved in RNA processing and mRNA degradation. Within the RNA degradosome, RNase E assembles into a homotetramer formed by a dimer of dimers. Tetramerization is essential for catalytic activity, but not for RNA-binding. Interacts with RhlB, PNPase (pnp) and enolase (eno). Interacts with DeaD at reduced temperature. Zn(2+) serves as cofactor. Mg(2+) is required as a cofactor.

It localises to the cytoplasm. Its subcellular location is the cell inner membrane. It catalyses the reaction Endonucleolytic cleavage of single-stranded RNA in A- and U-rich regions.. Its activity is regulated as follows. The presence of a 5'-monophosphate on substrate RNA accelerates its cleavage by catalytically activating the enzyme. Binding to the membrane stabilizes protein structure and increases affinity for the substrate. Functionally, endoribonuclease that plays a central role in RNA processing and decay. Required for the maturation of 5S and 16S rRNAs and the majority of tRNAs. Also involved in the degradation of most mRNAs. Can also process other RNA species, such as RNAI, a molecule that controls the replication of ColE1 plasmid, and the cell division inhibitor DicF-RNA. It initiates the decay of RNAs by cutting them internally near their 5'-end. It is able to remove poly(A) tails by an endonucleolytic process. Required to initiate rRNA degradation during both starvation and quality control; acts after RNase PH (rph) exonucleolytically digests the 3'-end of the 16S rRNA. Degradation of 16S rRNA leads to 23S rRNA degradation. Processes the 3 tRNA(Pro) precursors immediately after the 3'-CCA to generate the mature ends. Its function is as follows. Prefers 5'-monophosphorylated substrates over 5'-triphosphorylated substrates. 5'-monophosphate-assisted cleavage requires at least 2 and preferably 3 or more unpaired 5'-terminal nucleotides. The optimal spacing between the 5' end and the scissile phosphate appears to be 8 nucleotides. Any sequence of unpaired nucleotides at the 5'-end is tolerated. This chain is Ribonuclease E, found in Escherichia coli (strain K12).